Consider the following 336-residue polypeptide: Ribosomal RNA small subunit methyltransferase C (336 aa).

It belongs to the methyltransferase superfamily. RsmC family. Monomer.

It localises to the cytoplasm. The catalysed reaction is guanosine(1207) in 16S rRNA + S-adenosyl-L-methionine = N(2)-methylguanosine(1207) in 16S rRNA + S-adenosyl-L-homocysteine + H(+). Specifically methylates the guanine in position 1207 of 16S rRNA in the 30S particle. The sequence is that of Ribosomal RNA small subunit methyltransferase C from Hamiltonella defensa subsp. Acyrthosiphon pisum (strain 5AT).